The chain runs to 617 residues: Urocanate reductase (617 aa).

The residue at position 70 (Thr-70) is an FMN phosphoryl threonine. FAD-binding residues include Ala-124, Glu-143, Asn-151, Thr-152, Gly-156, Gly-157, and Asp-387. Arg-446 acts as the Proton donor in catalysis. Residues His-553, Glu-582, and Leu-598 each contribute to the FAD site.

Belongs to the FAD-dependent oxidoreductase 2 family. FRD/SDH subfamily. Requires FAD as cofactor. FMN is required as a cofactor.

The catalysed reaction is dihydrourocanate + A = urocanate + AH2. Its function is as follows. Catalyzes the two-electron reduction of urocanate to dihydrourocanate (also named imidazole propionate or deamino-histidine). Dihydrourocanate is present at higher concentrations in subjects with type 2 diabetes, and directly impairs glucose tolerance and insulin signaling at the level of insulin receptor substrate (IRS) through activation of p38 gamma (MAPK12)-p62-mTORC1. Therefore, the UrdA enzyme from the gut bacteria L.fermentum strain NBRC 3956 may contribute to the pathogenesis of type 2 diabetes by producing the microbial metabolite dihydrourocanate. This Limosilactobacillus fermentum (strain NBRC 3956 / LMG 18251) (Lactobacillus fermentum) protein is Urocanate reductase.